The chain runs to 402 residues: MESTEQPRNISGSMQSPRSPSSHPYLSVSVTDPVKLGNGVQAYISYRVITKTNLPEYQGPEKIVIRRYSDFVWLRDRLFEKYKGIFIPPLPEKSAVEKFRFSAEFIEMRRAALDIFVNRIALHPELQQSEDLRTFLQADEETMDRFRFQETSIFKKPADLMQMFRDVQSKVSDAVLGKEKPVEETTADYEKLKHYIFELENHLTEAQKHAYRLVKRHRELGQSLLDFGKAVKLLGACEGEPTGKAFSDLGTKSELLSIKLQKEAQQVLMNFEEPLKDYVRYVQSIKATIAERGTAFKQHCELSETTKLKEINLDKLMLTRSDKVGEAEIEYREIKAESEEATRRFERIVKRMEDEIVRFQEQKTEEMGVAFHQFAKGQARLANSVADAWRSLLPKLEASYSV.

The span at 1 to 10 (MESTEQPRNI) shows a compositional bias: polar residues. The segment at 1 to 25 (MESTEQPRNISGSMQSPRSPSSHPY) is disordered. Low complexity predominate over residues 11-24 (SGSMQSPRSPSSHP). The residue at position 16 (Ser-16) is a Phosphoserine. Positions 24–143 (PYLSVSVTDP…TFLQADEETM (120 aa)) constitute a PX domain. Residues Arg-67, Lys-93, and Arg-109 each contribute to the a 1,2-diacyl-sn-glycero-3-phospho-(1D-myo-inositol-3-phosphate) site. Residues 160-402 (LMQMFRDVQS…LPKLEASYSV (243 aa)) form the BAR domain.

Belongs to the sorting nexin family. Homodimer. Heterodimer with SNX2A or SNX2B. Component of the retromer complex which consists of VPS29 (MAG1), VPS26 (VPS26A or VPS26B), VPS35 (VPS35A or VPS35B or VPS35C), VPS5/17 (SNX1 or SNX2A or SNX2B). Interacts with BLOS1 and BLOS2. Ubiquitously expressed.

Its subcellular location is the cytoplasm. It is found in the endosome membrane. It localises to the prevacuolar compartment membrane. The protein resides in the golgi apparatus. The protein localises to the trans-Golgi network membrane. Plays a role in vesicular protein sorting. Acts at the crossroads between the secretory and endocytic pathways. Is involved in the endosome to vacuole protein transport via its interaction with the BLOS1/2 proteins and, as component of the membrane-associated retromer complex, is also involved in endosome-to-Golgi retrograde transport. Required for the auxin-carrier protein PIN2 sorting to the lytic vacuolar pathway and the trafficking of several plasma membrane proteins. Also involved in the efficient sorting of seed storage protein globulin 12S. The chain is Sorting nexin 1 (SNX1) from Arabidopsis thaliana (Mouse-ear cress).